The chain runs to 250 residues: Triosephosphate isomerase (250 aa).

9 to 11 (NWK) contributes to the substrate binding site. The active-site Electrophile is His-96. Residue Glu-166 is the Proton acceptor of the active site. Residues Gly-172, Ser-212, and 233–234 (GG) contribute to the substrate site.

It belongs to the triosephosphate isomerase family. In terms of assembly, homodimer.

It localises to the cytoplasm. The enzyme catalyses D-glyceraldehyde 3-phosphate = dihydroxyacetone phosphate. It participates in carbohydrate biosynthesis; gluconeogenesis. Its pathway is carbohydrate degradation; glycolysis; D-glyceraldehyde 3-phosphate from glycerone phosphate: step 1/1. Its function is as follows. Involved in the gluconeogenesis. Catalyzes stereospecifically the conversion of dihydroxyacetone phosphate (DHAP) to D-glyceraldehyde-3-phosphate (G3P). This chain is Triosephosphate isomerase, found in Chlorobium phaeovibrioides (strain DSM 265 / 1930) (Prosthecochloris vibrioformis (strain DSM 265)).